The following is a 92-amino-acid chain: Acylphosphatase (92 aa).

Residues 5 to 92 (QVQLFVRGRV…GDFFDFRITD (88 aa)) enclose the Acylphosphatase-like domain. Active-site residues include arginine 20 and asparagine 38.

The protein belongs to the acylphosphatase family.

It catalyses the reaction an acyl phosphate + H2O = a carboxylate + phosphate + H(+). This chain is Acylphosphatase (acyP), found in Sorangium cellulosum (strain So ce56) (Polyangium cellulosum (strain So ce56)).